We begin with the raw amino-acid sequence, 611 residues long: Leukotriene A-4 hydrolase (611 aa).

Lysine 73 is modified (N6-acetyllysine). A peptide-binding positions include 135–137 (QCQ) and 267–272 (PYGGME). Histidine 296 is a binding site for Zn(2+). The active-site Proton acceptor is the glutamate 297. Zn(2+)-binding residues include histidine 300 and glutamate 319. Residue lysine 337 is modified to N6-acetyllysine. Catalysis depends on tyrosine 384, which acts as the Proton donor. An N6-acetyllysine modification is found at lysine 414. Residue serine 416 is modified to Phosphoserine. 564-566 (RMK) is a binding site for a peptide. Residue lysine 573 is modified to N6-acetyllysine.

This sequence belongs to the peptidase M1 family. In terms of assembly, monomer. Requires Zn(2+) as cofactor. In terms of processing, phosphorylation at Ser-416 inhibits leukotriene-A4 hydrolase activity. activity.

Its subcellular location is the cytoplasm. It catalyses the reaction leukotriene A4 + H2O = leukotriene B4. It carries out the reaction (5S,6S)-epoxy-(18R)-hydroxy-(7E,9E,11Z,14Z,16E)-eicosapentaenoate + H2O = resolvin E1. The enzyme catalyses (5S,6S)-epoxy-(18S)-hydroxy-(7E,9E,11Z,14Z,16E)-eicosapentaenoate + H2O = 18S-resolvin E1. The catalysed reaction is Release of the N-terminal residue from a tripeptide.. It participates in lipid metabolism; leukotriene B4 biosynthesis. Its activity is regulated as follows. Inhibited by bestatin. The epoxide hydrolase activity is restrained by suicide inactivation that involves binding of LTA4 to Tyr-379. 4-(4-benzylphenyl)thiazol-2-amine (ARM1) selectively inhibits the epoxide hydrolase activity. Bifunctional zinc metalloenzyme that comprises both epoxide hydrolase (EH) and aminopeptidase activities. Acts as an epoxide hydrolase to catalyze the conversion of LTA4 to the pro-inflammatory mediator leukotriene B4 (LTB4). Also has aminopeptidase activity, with high affinity for N-terminal arginines of various synthetic tripeptides. In addition to its pro-inflammatory EH activity, may also counteract inflammation by its aminopeptidase activity, which inactivates by cleavage another neutrophil attractant, the tripeptide Pro-Gly-Pro (PGP), a bioactive fragment of collagen generated by the action of matrix metalloproteinase-9 (MMP9) and prolylendopeptidase (PREPL). Involved also in the biosynthesis of resolvin E1 and 18S-resolvin E1 from eicosapentaenoic acid, two lipid mediators that show potent anti-inflammatory and pro-resolving actions. The chain is Leukotriene A-4 hydrolase (LTA4H) from Bos taurus (Bovine).